A 1265-amino-acid polypeptide reads, in one-letter code: 1-phosphatidylinositol 4,5-bisphosphate phosphodiesterase gamma-2 (1265 aa).

A PH domain is found at arginine 20 to glutamine 131. Positions glutamine 312–lysine 456 constitute a PI-PLC X-box domain. Catalysis depends on residues histidine 327 and histidine 372. SH2 domains follow at residues tryptophan 532–valine 635 and tryptophan 646–valine 735. Tyrosine 753 and tyrosine 759 each carry phosphotyrosine; by BTK. One can recognise an SH3 domain in the interval methionine 769 to threonine 829. Residues leucine 930–arginine 1044 form the PI-PLC Y-box domain. One can recognise a C2 domain in the interval leucine 1038–asparagine 1169. A Phosphotyrosine; by BTK modification is found at tyrosine 1197. 2 positions are modified to phosphotyrosine: tyrosine 1217 and tyrosine 1245.

As to quaternary structure, part of a complex composed of EEIG1, TNFRSF11A/RANK, PLCG2, GAB2, TEC and BTK; complex formation increases in the presence of TNFSF11/RANKL. Interacts (via SH2 domain) with CSF1R (tyrosine phosphorylated). Interacts constitutively with THEMIS2. Ca(2+) is required as a cofactor. In terms of processing, phosphorylated on tyrosine residues by CSF1R. Phosphorylated on tyrosine residues by BTK and SYK; upon ligand-induced activation of a variety of growth factor receptors and immune system receptors. Phosphorylation leads to increased phospholipase activity.

It is found in the membrane raft. It carries out the reaction a 1,2-diacyl-sn-glycero-3-phospho-(1D-myo-inositol-4,5-bisphosphate) + H2O = 1D-myo-inositol 1,4,5-trisphosphate + a 1,2-diacyl-sn-glycerol + H(+). In terms of biological role, the production of the second messenger molecules diacylglycerol (DAG) and inositol 1,4,5-trisphosphate (IP3) is mediated by activated phosphatidylinositol-specific phospholipase C enzymes. It is a crucial enzyme in transmembrane signaling. The sequence is that of 1-phosphatidylinositol 4,5-bisphosphate phosphodiesterase gamma-2 from Homo sapiens (Human).